Here is a 379-residue protein sequence, read N- to C-terminus: Histidinol-phosphate aminotransferase (379 aa).

Residue K236 is modified to N6-(pyridoxal phosphate)lysine.

Belongs to the class-II pyridoxal-phosphate-dependent aminotransferase family. Histidinol-phosphate aminotransferase subfamily. Homodimer. It depends on pyridoxal 5'-phosphate as a cofactor.

The enzyme catalyses L-histidinol phosphate + 2-oxoglutarate = 3-(imidazol-4-yl)-2-oxopropyl phosphate + L-glutamate. The protein operates within amino-acid biosynthesis; L-histidine biosynthesis; L-histidine from 5-phospho-alpha-D-ribose 1-diphosphate: step 7/9. The chain is Histidinol-phosphate aminotransferase from Desulfotalea psychrophila (strain LSv54 / DSM 12343).